We begin with the raw amino-acid sequence, 541 residues long: GPI alpha-1,2-mannosyltransferase 3 (541 aa).

A glycan (N-linked (GlcNAc...) asparagine) is linked at N18. The next 9 membrane-spanning stretches (helical) occupy residues 53 to 73 (LVLF…TSFV), 126 to 146 (VHLL…IADL), 182 to 202 (LTNT…PLEG), 214 to 234 (LVAL…PLLF), 245 to 265 (DLIL…SLII), 305 to 325 (GFPA…FLAP), 330 to 350 (IFLV…HKEF), 352 to 372 (FIYP…NNLK), and 377 to 397 (PALS…GLVH). N-linked (GlcNAc...) asparagine glycosylation is present at N417.

It belongs to the glycosyltransferase 22 family. PIGB subfamily.

The protein localises to the endoplasmic reticulum membrane. Its pathway is glycolipid biosynthesis; glycosylphosphatidylinositol-anchor biosynthesis. Its function is as follows. Alpha-1,2-mannosyltransferase that catalyzes the transfer of the third mannose, via an alpha-1,2 bond, from a dolichol-phosphate-mannose (Dol-P-Man) to an alpha-D-Man-(1-&gt;6)-2-PEtn-alpha-D-Man-(1-&gt;4)-alpha-D-GlcN-(1-&gt;6)-(1-radyl,2-acyl-sn-glycero-3-phospho)-2-acyl-inositol intermediate to generate an alpha-D-Man-(1-&gt;2)-alpha-D-Man-(1-&gt;6)-2-PEtn-alpha-D-Man-(1-&gt;4)-alpha-D-GlcN-(1-&gt;6)-(1-radyl,2-acyl-sn-glycero-3-phospho)-2-acyl-inositol (also termed H6) and participates in the nineth step of the glycosylphosphatidylinositol-anchor biosynthesis. May also add the third mannose to an alpha-D-Man-(1-&gt;6)-alpha-D-Man-(1-&gt;4)-alpha-D-GlcN-(1-&gt;6)-(1-radyl,2-acyl-sn-glycero-3-phospho)-2-acyl-inositol (also termed H3) intermediate generating an alpha-D-Man-(1-&gt;2)-alpha-D-Man-(1-&gt;6)-alpha-D-Man-(1-&gt;4)-alpha-D-GlcN-(1-&gt;6)-(1-radyl,2-acyl-sn-glycero-3-phospho)-2-acyl-inositol (also termed H4). The polypeptide is GPI alpha-1,2-mannosyltransferase 3 (Bos taurus (Bovine)).